Reading from the N-terminus, the 696-residue chain is PWWP domain-containing DNA repair factor 3B (696 aa).

2 stretches are compositionally biased toward polar residues: residues 119–128 (QNVPQKQSDS) and 290–300 (CLDTSQNQPSM). Disordered regions lie at residues 119-143 (QNVP…DLPG) and 278-303 (NIED…MESE). S128 bears the Phosphoserine mark. The PWWP domain occupies 392–453 (TGMIVWFKYQ…KKFDCKEKQM (62 aa)).

The protein belongs to the PWWP3A family.

This is PWWP domain-containing DNA repair factor 3B from Homo sapiens (Human).